The chain runs to 244 residues: Large ribosomal subunit protein bL25 (244 aa).

The tract at residues 197–244 (ADVEAEAAEAALAKEAATEAAEEEETEKPASEAEASGEAEQADTDKKE) is disordered. Over residues 204-215 (AEAALAKEAATE) the composition is skewed to low complexity.

This sequence belongs to the bacterial ribosomal protein bL25 family. CTC subfamily. As to quaternary structure, part of the 50S ribosomal subunit; part of the 5S rRNA/L5/L18/L25 subcomplex. Contacts the 5S rRNA. Binds to the 5S rRNA independently of L5 and L18.

This is one of the proteins that binds to the 5S RNA in the ribosome where it forms part of the central protuberance. The chain is Large ribosomal subunit protein bL25 from Coxiella burnetii (strain CbuK_Q154) (Coxiella burnetii (strain Q154)).